A 168-amino-acid polypeptide reads, in one-letter code: Myelin basic protein (168 aa).

Ala-1 carries the N-acetylalanine modification. 2 positions are modified to phosphoserine: Ser-7 and Ser-12. Tyr-14 bears the Phosphotyrosine mark. The residue at position 17 (Thr-17) is a Phosphothreonine. Phosphoserine is present on Ser-19. Thr-20 carries the post-translational modification Phosphothreonine. Residues Arg-25 and Arg-31 each carry the citrulline modification. Thr-35 is subject to Phosphothreonine. Ser-40 is subject to Phosphoserine. The tract at residues 42–84 (GRFFSSDRGAPKRGSGKDHAARTTHYGSLPQKSGHRPQDENPV) is disordered. Omega-N-methylarginine is present on residues Arg-43 and Arg-49. The induces experimental autoimmune encephalomyelitis (EAE) stretch occupies residues 45–86 (FSSDRGAPKRGSGKDHAARTTHYGSLPQKSGHRPQDENPVVH). Ser-56 carries the post-translational modification Phosphoserine. Thr-65 is subject to Phosphothreonine. Tyr-67 carries the phosphotyrosine modification. Residue Ser-74 is modified to Phosphoserine. Thr-93 and Thr-96 each carry phosphothreonine. Gln-101 carries the post-translational modification Deamidated glutamine; partial. Arg-105 carries the post-translational modification Omega-N-methylarginine; alternate. Arg-105 carries the post-translational modification Symmetric dimethylarginine; alternate. A Phosphoserine modification is found at Ser-113. Lys-120 is modified (N6-acetyllysine). A Citrulline modification is found at Arg-128. Position 145 is a deamidated glutamine (Gln-145). Position 157 is a citrulline (Arg-157). Ser-159 is modified (phosphoserine). Ser-163 is modified (phosphoserine; by UHMK1). Position 168 is a citrulline (Arg-168).

The protein belongs to the myelin basic protein family. In terms of assembly, homodimer. In terms of processing, as in other animals, several charge isomers may be produced as a result of optional post-translational modifications, such as phosphorylation of serine or threonine residues, deamidation of glutamine or asparagine residues, citrullination and methylation of arginine residues. Phosphorylated by TAOK2, VRK2, MAPK11, MAPK12, MAPK14 and MINK1. Post-translationally, proteolytically cleaved in B cell lysosomes by cathepsin CTSG which degrades the major immunogenic MBP epitope and prevents the activation of MBP-specific autoreactive T cells. As to expression, found in both the central and the peripheral nervous system.

Its subcellular location is the myelin membrane. Its function is as follows. Is, with PLP, the most abundant protein component of the myelin membrane in the CNS. Has a role in both the formation and stabilization of this compact multilayer arrangement of bilayers. Each splice variant and charge isomer may have a specialized function in the assembly of an optimized, biochemically functional myelin membrane. The sequence is that of Myelin basic protein (MBP) from Oryctolagus cuniculus (Rabbit).